The chain runs to 59 residues: MATGKCYCPEDPRVGPLLVLCLLLLLILFSRSWNVAPVVVPSYHTVYHHEKYQNIEIQK.

The chain crosses the membrane as a helical span at residues 13 to 35 (RVGPLLVLCLLLLLILFSRSWNV).

The protein localises to the membrane. Cell-to-cell movement. This chain is Putative movement protein p6.6, found in Panicum mosaic virus (strain United States/Kansas 109S) (PMV).